The sequence spans 238 residues: Ribitol-5-phosphate cytidylyltransferase (238 aa).

Residues Leu7 to Gly10 and Gly81 to Thr87 contribute to the CTP site.

The protein belongs to the IspD/TarI cytidylyltransferase family. TarI subfamily.

The enzyme catalyses D-ribitol 5-phosphate + CTP + H(+) = CDP-L-ribitol + diphosphate. Its pathway is cell wall biogenesis; poly(ribitol phosphate) teichoic acid biosynthesis. Catalyzes the transfer of the cytidylyl group of CTP to D-ribitol 5-phosphate. The polypeptide is Ribitol-5-phosphate cytidylyltransferase (Staphylococcus epidermidis (strain ATCC 35984 / DSM 28319 / BCRC 17069 / CCUG 31568 / BM 3577 / RP62A)).